Reading from the N-terminus, the 125-residue chain is Large ribosomal subunit protein eL22 (125 aa).

It belongs to the eukaryotic ribosomal protein eL22 family. As to quaternary structure, component of the large ribosomal subunit.

It localises to the cytoplasm. Component of the large ribosomal subunit. The ribosome is a large ribonucleoprotein complex responsible for the synthesis of proteins in the cell. This is Large ribosomal subunit protein eL22 (rpl22) from Gadus morhua (Atlantic cod).